The primary structure comprises 119 residues: Ribosome-binding factor A (119 aa).

It belongs to the RbfA family. As to quaternary structure, monomer. Binds 30S ribosomal subunits, but not 50S ribosomal subunits or 70S ribosomes.

It localises to the cytoplasm. One of several proteins that assist in the late maturation steps of the functional core of the 30S ribosomal subunit. Associates with free 30S ribosomal subunits (but not with 30S subunits that are part of 70S ribosomes or polysomes). Required for efficient processing of 16S rRNA. May interact with the 5'-terminal helix region of 16S rRNA. In Mycoplasmoides gallisepticum (strain R(low / passage 15 / clone 2)) (Mycoplasma gallisepticum), this protein is Ribosome-binding factor A.